The primary structure comprises 134 residues: Large ribosomal subunit protein uL16c (134 aa).

Residues 1–22 (MLSPKRTRFRKQHRGRMKGISH) form a disordered region.

Belongs to the universal ribosomal protein uL16 family. As to quaternary structure, part of the 50S ribosomal subunit.

It localises to the plastid. The protein resides in the chloroplast. The sequence is that of Large ribosomal subunit protein uL16c from Nicotiana tomentosiformis (Tobacco).